Reading from the N-terminus, the 200-residue chain is uncharacterized protein (200 aa).

This is an uncharacterized protein from Ureaplasma parvum serovar 3 (strain ATCC 700970).